Here is a 407-residue protein sequence, read N- to C-terminus: Probable endo-beta-1,4-glucanase celB (407 aa).

A signal peptide spans 1-18 (MAQTLAAASLVLVPLVTA). Asn136 carries N-linked (GlcNAc...) asparagine glycosylation. The Nucleophile role is filled by Glu216. Glu221 acts as the Proton donor in catalysis.

The protein belongs to the glycosyl hydrolase 7 (cellulase C) family.

It is found in the secreted. The enzyme catalyses Endohydrolysis of (1-&gt;4)-beta-D-glucosidic linkages in cellulose, lichenin and cereal beta-D-glucans.. Has endoglucanase activity on substrates containing beta-1,4 glycosidic bonds, like in carboxymethylcellulose (CMC), hydroxyethylcellulose (HEC) and beta-glucan. Involved in the degradation of complex natural cellulosic substrates. The sequence is that of Probable endo-beta-1,4-glucanase celB (celB) from Aspergillus fumigatus (strain ATCC MYA-4609 / CBS 101355 / FGSC A1100 / Af293) (Neosartorya fumigata).